Consider the following 604-residue polypeptide: Glutamine--fructose-6-phosphate aminotransferase [isomerizing] (604 aa).

Cysteine 2 acts as the Nucleophile; for GATase activity in catalysis. Positions 2-218 (CGIVGVVGNR…DKELVILTKD (217 aa)) constitute a Glutamine amidotransferase type-2 domain. 2 consecutive SIS domains span residues 284–423 (IVKT…ANGK) and 456–594 (VEKL…VDKP). Lysine 599 functions as the For Fru-6P isomerization activity in the catalytic mechanism.

Homodimer.

It is found in the cytoplasm. The enzyme catalyses D-fructose 6-phosphate + L-glutamine = D-glucosamine 6-phosphate + L-glutamate. In terms of biological role, catalyzes the first step in hexosamine metabolism, converting fructose-6P into glucosamine-6P using glutamine as a nitrogen source. The protein is Glutamine--fructose-6-phosphate aminotransferase [isomerizing] of Streptococcus pyogenes serotype M6 (strain ATCC BAA-946 / MGAS10394).